The chain runs to 505 residues: Chromatin assembly factor 1 subunit FAS2 homolog (505 aa).

7 WD repeats span residues 11–50, 62–101, 110–149, 152–191, 223–268, 278–333, and 337–378; these read HEQQ…SDKK, SHSS…DGEA, FHHK…VQQK, GHLH…KSKN, FHDE…SRRD, GASK…PILI, and LHYA…LPYN. The interval 479-505 is disordered; the sequence is VTAPPVSTKNSASSKPTKKRITPIAIN.

This sequence belongs to the WD repeat HIR1 family. As to quaternary structure, component of the chromatin assembly factor 1 (CAF-1) complex, composed of FSM (FAS1), FAS2 and MSI1.

It is found in the nucleus. In terms of biological role, component of the chromatin assembly factor complex (CAF-1) involved in chromatin assembly following DNA replication and DNA repair. Required for several aspects of development, including apical meristem maintenance by regulating the durations of the S- and G2-phases of the cell cycle through its chromatin assembly activity. The polypeptide is Chromatin assembly factor 1 subunit FAS2 homolog (FAS2) (Oryza sativa subsp. japonica (Rice)).